Consider the following 501-residue polypeptide: Raftlin-2 (501 aa).

Disordered regions lie at residues M1–F20 and S196–G238. The N-myristoyl glycine moiety is linked to residue G2. Residue C3 is the site of S-palmitoyl cysteine attachment. The segment covering M224–S233 has biased composition (polar residues). Phosphoserine is present on S405. The interval A407–P454 is disordered. The residue at position 409 (T409) is a Phosphothreonine. Residues T410–K425 are compositionally biased toward basic and acidic residues. Over residues T427–P440 the composition is skewed to polar residues. Position 430 is a phosphoserine (S430). Basic and acidic residues predominate over residues E442 to R451.

It belongs to the raftlin family.

It is found in the cell membrane. In terms of biological role, upon bacterial lipopolysaccharide stimulation, mediates clathrin-dependent internalization of TLR4 in dendritic cells, resulting in activation of TICAM1-mediated signaling and subsequent IFNB1 production. May regulate B-cell antigen receptor mediated-signaling. This Pongo abelii (Sumatran orangutan) protein is Raftlin-2 (RFTN2).